The following is a 474-amino-acid chain: tRNA-2-methylthio-N(6)-dimethylallyladenosine synthase (474 aa).

One can recognise an MTTase N-terminal domain in the interval Lys3–Ile120. Cys12, Cys49, Cys83, Cys157, Cys161, and Cys164 together coordinate [4Fe-4S] cluster. Residues Arg143 to Arg382 form the Radical SAM core domain. The region spanning Val381–Arg444 is the TRAM domain.

It belongs to the methylthiotransferase family. MiaB subfamily. Monomer. It depends on [4Fe-4S] cluster as a cofactor.

The protein localises to the cytoplasm. The enzyme catalyses N(6)-dimethylallyladenosine(37) in tRNA + (sulfur carrier)-SH + AH2 + 2 S-adenosyl-L-methionine = 2-methylsulfanyl-N(6)-dimethylallyladenosine(37) in tRNA + (sulfur carrier)-H + 5'-deoxyadenosine + L-methionine + A + S-adenosyl-L-homocysteine + 2 H(+). Functionally, catalyzes the methylthiolation of N6-(dimethylallyl)adenosine (i(6)A), leading to the formation of 2-methylthio-N6-(dimethylallyl)adenosine (ms(2)i(6)A) at position 37 in tRNAs that read codons beginning with uridine. The sequence is that of tRNA-2-methylthio-N(6)-dimethylallyladenosine synthase from Nitrosospira multiformis (strain ATCC 25196 / NCIMB 11849 / C 71).